Reading from the N-terminus, the 302-residue chain is Recombination-associated protein RdgC (302 aa).

It belongs to the RdgC family.

The protein localises to the cytoplasm. It is found in the nucleoid. In terms of biological role, may be involved in recombination. In Mannheimia succiniciproducens (strain KCTC 0769BP / MBEL55E), this protein is Recombination-associated protein RdgC.